The primary structure comprises 388 residues: UDP-N-acetylglucosamine--N-acetylmuramyl-(pentapeptide) pyrophosphoryl-undecaprenol N-acetylglucosamine transferase (388 aa).

UDP-N-acetyl-alpha-D-glucosamine is bound by residues 42 to 44 (TGG), N159, R195, S223, I277, and Q322.

This sequence belongs to the glycosyltransferase 28 family. MurG subfamily.

The protein localises to the cell inner membrane. It carries out the reaction di-trans,octa-cis-undecaprenyl diphospho-N-acetyl-alpha-D-muramoyl-L-alanyl-D-glutamyl-meso-2,6-diaminopimeloyl-D-alanyl-D-alanine + UDP-N-acetyl-alpha-D-glucosamine = di-trans,octa-cis-undecaprenyl diphospho-[N-acetyl-alpha-D-glucosaminyl-(1-&gt;4)]-N-acetyl-alpha-D-muramoyl-L-alanyl-D-glutamyl-meso-2,6-diaminopimeloyl-D-alanyl-D-alanine + UDP + H(+). It functions in the pathway cell wall biogenesis; peptidoglycan biosynthesis. Its function is as follows. Cell wall formation. Catalyzes the transfer of a GlcNAc subunit on undecaprenyl-pyrophosphoryl-MurNAc-pentapeptide (lipid intermediate I) to form undecaprenyl-pyrophosphoryl-MurNAc-(pentapeptide)GlcNAc (lipid intermediate II). This chain is UDP-N-acetylglucosamine--N-acetylmuramyl-(pentapeptide) pyrophosphoryl-undecaprenol N-acetylglucosamine transferase, found in Albidiferax ferrireducens (strain ATCC BAA-621 / DSM 15236 / T118) (Rhodoferax ferrireducens).